Reading from the N-terminus, the 381-residue chain is Subtilisin E (381 aa).

An N-terminal signal peptide occupies residues 1 to 29; the sequence is MRSKKLWISLLFALTLIFTMAFSNMSAQA. A propeptide spanning residues 30 to 106 is cleaved from the precursor; sequence AGKSSTEKKY…VEEDHIAHEY (77 aa). Residues 38 to 103 form the Inhibitor I9 domain; that stretch reads KYIVGFKQTM…VAYVEEDHIA (66 aa). Ca(2+) is bound at residue Gln108. In terms of domain architecture, Peptidase S8 spans 111 to 380; the sequence is PYGISQIKAP…KGLINVQAAA (270 aa). The active-site Charge relay system is the Asp138. Residue Asp147 coordinates Ca(2+). His170 (charge relay system) is an active-site residue. The Ca(2+) site is built by Leu181, Asn183, Ile185, Val187, Ala275, Tyr277, Thr280, and Asp303. The active-site Charge relay system is Ser327.

This sequence belongs to the peptidase S8 family. Ca(2+) serves as cofactor.

The protein resides in the secreted. It carries out the reaction Hydrolysis of proteins with broad specificity for peptide bonds, and a preference for a large uncharged residue in P1. Hydrolyzes peptide amides.. Inhibited by PMSF (phenylmethylsulphonyl fluoride) and 3,4-dichloroisocoumarin but not by EDTA (shown for strain RT-5). Its function is as follows. An extracellular alkaline serine protease, it catalyzes the hydrolysis of proteins and peptide amides. This is Subtilisin E from Bacillus subtilis (strain 168).